A 115-amino-acid polypeptide reads, in one-letter code: Large ribosomal subunit protein bL31B (115 aa).

It belongs to the bacterial ribosomal protein bL31 family. Type B subfamily. In terms of assembly, part of the 50S ribosomal subunit.

The chain is Large ribosomal subunit protein bL31B from Polynucleobacter asymbioticus (strain DSM 18221 / CIP 109841 / QLW-P1DMWA-1) (Polynucleobacter necessarius subsp. asymbioticus).